The chain runs to 269 residues: Type II iodothyronine deiodinase (269 aa).

Residues 1 to 9 (MGILSVDLL) lie on the Lumenal side of the membrane. A helical; Signal-anchor for type III membrane protein transmembrane segment spans residues 10–34 (ITLQILPVFFSNCLFLALYDSVILL). At 35-269 (KHVVLLLSRS…KNFSKRUKLD (235 aa)) the chain is on the cytoplasmic side. The disordered stretch occupies residues 83–103 (NSSVVHVSSPEGGDTSGNGAQ). The active site involves Sec-133. Residues Sec-133 and Sec-266 are each a non-standard amino acid (selenocysteine).

It belongs to the iodothyronine deiodinase family. As to quaternary structure, predominantly monomer. Can form homodimers but homodimerization is not essential for enzyme activity. Interacts with USP20 and USP33. Interacts with MARCHF6. In terms of processing, ubiquitinated by MARCHF6, leading to its degradation by the proteasome. Deubiquitinated by USP20 and USP33. In terms of tissue distribution, highly expressed in thyroid, mammary and pituitary glands, then in hypothalamus. Low levels detected in diaphragm, heart, kidney and lung.

It localises to the endoplasmic reticulum membrane. It catalyses the reaction 3,3',5-triiodo-L-thyronine + iodide + A + H(+) = L-thyroxine + AH2. It carries out the reaction 3,3'-diiodo-L-thyronine + iodide + A + H(+) = 3,3',5'-triiodo-L-thyronine + AH2. The enzyme catalyses 3'-iodo-L-thyronine + iodide + A + H(+) = 3',5'-diiodo-L-thyronine + AH2. The catalysed reaction is 3,3'-diiodothyronamine + iodide + A + H(+) = 3,3',5'-triiodothyronamine + AH2. It catalyses the reaction 3'-iodothyronamine + iodide + A + H(+) = 3',5'-diiodothyronamine + AH2. In terms of biological role, plays a crucial role in the metabolism of thyroid hormones (TH) and has specific roles in TH activation and inactivation by deiodination. Catalyzes the deiodination of L-thyroxine (T4) to 3,5,3'-triiodothyronine (T3), 3,3',5'-triiodothyronine (rT3) to 3,3'-diiodothyronine (3,3'-T2) and 3',5'-diiodothyronine (3',5'-T2) to 3'-monoiodothyronine (3'-T1) via outer-ring deiodination (ORD). Catalyzes the phenolic ring deiodinations of 3,3',5'-triiodothyronamine and 3',5'- diiodothyronamine. The sequence is that of Type II iodothyronine deiodinase (DIO2) from Bos taurus (Bovine).